We begin with the raw amino-acid sequence, 1135 residues long: Protocadherin-18 (1135 aa).

A signal peptide spans 1–27; the sequence is MHQMNAKMHFRFVFALLIVSFNHDVLG. Cadherin domains follow at residues 28 to 137, 138 to 246, 247 to 354, 361 to 465, 466 to 576, and 582 to 688; these read KNLK…SPQF, SRSL…SPAF, EQQS…KPEI, PGKE…PPHF, QRSR…VPVV, and RNNT…STAM. Over 28–699 the chain is Extracellular; sequence KNLKYRIYEE…SVSQASLDVS (672 aa). The N-linked (GlcNAc...) asparagine glycan is linked to Asn103. Residues Asn269, Asn420, Asn559, Asn583, and Asn641 are each glycosylated (N-linked (GlcNAc...) asparagine). Residues 700-720 traverse the membrane as a helical segment; sequence MIIIISLGAICAVLLVIMVLF. At 721–1135 the chain is on the cytoplasmic side; that stretch reads ATRCNREKKD…NKLLQDVRQS (415 aa). 4 disordered regions span residues 769–800, 869–889, 942–1003, and 1023–1046; these read LPIR…NSHQ, SLKD…DLGR, DYRS…STSS, and YSEC…PAKT. The span at 791–800 shows a compositional bias: polar residues; sequence GSRQSHNSHQ. Residues 869–878 show a composition bias toward basic and acidic residues; it reads SLKDSGRGDS. Residues 893–1135 are interaction with DAB1; it reads IDRLLGEGFS…NKLLQDVRQS (243 aa). Basic and acidic residues predominate over residues 1028-1039; sequence EVDRSNSLERRK.

As to quaternary structure, interacts with DAB1. In terms of tissue distribution, expressed in all tissues, with highest expression in lung and ovary.

It localises to the cell membrane. Potential calcium-dependent cell-adhesion protein. This is Protocadherin-18 (PCDH18) from Homo sapiens (Human).